A 71-amino-acid chain; its full sequence is MVESTFEPNITTKSVGQAIRAHLRVLKLTKKPSREEFLTIAKVAGAGILAVGAIGFIIYVLLTMLPQWVSQ.

The chain crosses the membrane as a helical span at residues 43–63 (VAGAGILAVGAIGFIIYVLLT).

It belongs to the SecE/SEC61-gamma family. In terms of assembly, component of the Sec protein translocase complex. Heterotrimer consisting of SecY (alpha), SecG (beta) and SecE (gamma) subunits. The heterotrimers can form oligomers, although 1 heterotrimer is thought to be able to translocate proteins. Interacts with the ribosome. May interact with SecDF, and other proteins may be involved.

It localises to the cell membrane. Essential subunit of the Sec protein translocation channel SecYEG. Clamps together the 2 halves of SecY. May contact the channel plug during translocation. The sequence is that of Protein translocase subunit SecE from Methanosarcina acetivorans (strain ATCC 35395 / DSM 2834 / JCM 12185 / C2A).